A 277-amino-acid polypeptide reads, in one-letter code: Large ribosomal subunit protein uL2 (277 aa).

Disordered regions lie at residues 37-60 and 223-265; these read KNSTAGRNNNGHITTRHKGGGHKH and VVMN…KRTD. Over residues 39-49 the composition is skewed to polar residues; the sequence is STAGRNNNGHI. The span at 50-60 shows a compositional bias: basic residues; sequence TTRHKGGGHKH. Residues 229–244 are compositionally biased toward basic and acidic residues; it reads DHPHGGGEGRTGEARE.

It belongs to the universal ribosomal protein uL2 family. Part of the 50S ribosomal subunit. Forms a bridge to the 30S subunit in the 70S ribosome.

One of the primary rRNA binding proteins. Required for association of the 30S and 50S subunits to form the 70S ribosome, for tRNA binding and peptide bond formation. It has been suggested to have peptidyltransferase activity; this is somewhat controversial. Makes several contacts with the 16S rRNA in the 70S ribosome. The chain is Large ribosomal subunit protein uL2 from Neisseria meningitidis serogroup A / serotype 4A (strain DSM 15465 / Z2491).